A 294-amino-acid polypeptide reads, in one-letter code: Urease accessory protein UreD 1 (294 aa).

The interval 1 to 20 (MALSLDDLPEKPAPAEPVSA) is disordered.

Belongs to the UreD family. In terms of assembly, ureD, UreF and UreG form a complex that acts as a GTP-hydrolysis-dependent molecular chaperone, activating the urease apoprotein by helping to assemble the nickel containing metallocenter of UreC. The UreE protein probably delivers the nickel.

The protein resides in the cytoplasm. In terms of biological role, required for maturation of urease via the functional incorporation of the urease nickel metallocenter. This Methylorubrum populi (strain ATCC BAA-705 / NCIMB 13946 / BJ001) (Methylobacterium populi) protein is Urease accessory protein UreD 1.